Here is a 194-residue protein sequence, read N- to C-terminus: Alkyl hydroperoxide reductase AhpD (194 aa).

The active-site Proton donor is the Cys-132. Cys-132 and Cys-135 are disulfide-bonded. Residue Cys-135 is the Cysteine sulfenic acid (-SOH) intermediate of the active site.

Belongs to the AhpD family.

The enzyme catalyses N(6)-[(R)-dihydrolipoyl]-L-lysyl-[lipoyl-carrier protein] + a hydroperoxide = N(6)-[(R)-lipoyl]-L-lysyl-[lipoyl-carrier protein] + an alcohol + H2O. Functionally, antioxidant protein with alkyl hydroperoxidase activity. Required for the reduction of the AhpC active site cysteine residues and for the regeneration of the AhpC enzyme activity. The sequence is that of Alkyl hydroperoxide reductase AhpD from Koribacter versatilis (strain Ellin345).